The following is a 99-amino-acid chain: Nucleoid-associated protein EbfC (99 aa).

Belongs to the YbaB/EbfC family. In terms of assembly, homodimer.

The protein resides in the cytoplasm. It is found in the nucleoid. Its function is as follows. Binds to DNA and alters its conformation. May be involved in regulation of gene expression, nucleoid organization and DNA protection. The sequence is that of Nucleoid-associated protein EbfC from Borrelia hermsii (strain HS1 / DAH).